Reading from the N-terminus, the 256-residue chain is Enolase-phosphatase E1 (256 aa).

The Mg(2+) site is built by D14 and E16. Residues S142 to S143 and K176 each bind substrate. D201 is a binding site for Mg(2+).

The protein belongs to the HAD-like hydrolase superfamily. MasA/MtnC family. As to quaternary structure, monomer. Mg(2+) is required as a cofactor.

It is found in the cytoplasm. The protein resides in the nucleus. It carries out the reaction 5-methylsulfanyl-2,3-dioxopentyl phosphate + H2O = 1,2-dihydroxy-5-(methylsulfanyl)pent-1-en-3-one + phosphate. The protein operates within amino-acid biosynthesis; L-methionine biosynthesis via salvage pathway; L-methionine from S-methyl-5-thio-alpha-D-ribose 1-phosphate: step 3/6. It functions in the pathway amino-acid biosynthesis; L-methionine biosynthesis via salvage pathway; L-methionine from S-methyl-5-thio-alpha-D-ribose 1-phosphate: step 4/6. Its function is as follows. Bifunctional enzyme that catalyzes the enolization of 2,3-diketo-5-methylthiopentyl-1-phosphate (DK-MTP-1-P) into the intermediate 2-hydroxy-3-keto-5-methylthiopentenyl-1-phosphate (HK-MTPenyl-1-P), which is then dephosphorylated to form the acireductone 1,2-dihydroxy-3-keto-5-methylthiopentene (DHK-MTPene). The sequence is that of Enolase-phosphatase E1 from Drosophila sechellia (Fruit fly).